Here is a 275-residue protein sequence, read N- to C-terminus: NH(3)-dependent NAD(+) synthetase (275 aa).

46–53 contacts ATP; the sequence is GISGGQDS. Position 52 (aspartate 52) interacts with Mg(2+). Position 140 (arginine 140) interacts with deamido-NAD(+). Residue threonine 160 participates in ATP binding. Glutamate 165 is a binding site for Mg(2+). Deamido-NAD(+) is bound by residues lysine 173 and aspartate 180. ATP is bound by residues lysine 189 and threonine 211. A deamido-NAD(+)-binding site is contributed by 260–261; it reads HK.

Belongs to the NAD synthetase family. As to quaternary structure, homodimer.

The catalysed reaction is deamido-NAD(+) + NH4(+) + ATP = AMP + diphosphate + NAD(+) + H(+). It functions in the pathway cofactor biosynthesis; NAD(+) biosynthesis; NAD(+) from deamido-NAD(+) (ammonia route): step 1/1. Its function is as follows. Catalyzes the ATP-dependent amidation of deamido-NAD to form NAD. Uses ammonia as a nitrogen source. The polypeptide is NH(3)-dependent NAD(+) synthetase (Salmonella typhi).